Consider the following 449-residue polypeptide: Protein adenylyltransferase FICD (449 aa).

A helical transmembrane segment spans residues L15–L35. TPR repeat units lie at residues A96–F129 and V130–H163. The Inhibitory (S/T)XXXE(G/N) motif signature appears at T220–G225. Residues E224, E250–Q251, G358–G360, and R364 contribute to the ATP site. One can recognise a Fido domain in the interval I275 to K410.

The protein belongs to the fic family.

The protein localises to the membrane. The catalysed reaction is L-tyrosyl-[protein] + ATP = O-(5'-adenylyl)-L-tyrosyl-[protein] + diphosphate. It catalyses the reaction L-threonyl-[protein] + ATP = 3-O-(5'-adenylyl)-L-threonyl-[protein] + diphosphate. Adenylyltransferase activity is inhibited by the inhibitory helix present at the N-terminus: Glu-224 binds ATP and competes with ATP-binding at Arg-364, thereby preventing adenylyltransferase activity. Activation dissociates ATP-binding from Glu-224, allowing ordered binding of the entire ATP moiety with the alpha-phosphate in an orientation that is productive for accepting an incoming target hydroxyl side chain. Adenylyltransferase that mediates the addition of adenosine 5'-monophosphate (AMP) to specific residues of target proteins. The chain is Protein adenylyltransferase FICD (ficd) from Danio rerio (Zebrafish).